The primary structure comprises 130 residues: Methylglyoxal synthase (130 aa).

One can recognise an MGS-like domain in the interval 1–130 (MSTPRIALIA…DLARRLTANA (130 aa)). Residues histidine 11, lysine 15, 37-40 (TGTT), and 57-58 (SG) contribute to the substrate site. Aspartate 63 acts as the Proton donor/acceptor in catalysis. A substrate-binding site is contributed by histidine 90.

It belongs to the methylglyoxal synthase family.

The catalysed reaction is dihydroxyacetone phosphate = methylglyoxal + phosphate. Its function is as follows. Catalyzes the formation of methylglyoxal from dihydroxyacetone phosphate. This Burkholderia mallei (strain NCTC 10247) protein is Methylglyoxal synthase.